The sequence spans 434 residues: Flagellum-specific ATP synthase (434 aa).

An ATP-binding site is contributed by 164–171 (AGSGVGKS).

This sequence belongs to the ATPase alpha/beta chains family.

It is found in the cytoplasm. It carries out the reaction ATP + H2O + 4 H(+)(in) = ADP + phosphate + 5 H(+)(out). In terms of biological role, probable catalytic subunit of a protein translocase for flagellum-specific export, or a proton translocase involved in local circuits at the flagellum. The polypeptide is Flagellum-specific ATP synthase (fliI) (Helicobacter pylori (strain ATCC 700392 / 26695) (Campylobacter pylori)).